The following is a 289-amino-acid chain: Phosphatidylglycerol--prolipoprotein diacylglyceryl transferase (289 aa).

Transmembrane regions (helical) follow at residues 23–43 (ALHW…WLAV), 61–81 (LLYM…VLFY), 99–119 (GGMS…WFAH), 125–145 (FFQV…AGRL), 199–219 (SQLY…NLFI), 226–246 (GSVS…TEFF), and 259–279 (LFSM…LMMV). Residue Arg144 coordinates a 1,2-diacyl-sn-glycero-3-phospho-(1'-sn-glycerol).

The protein belongs to the Lgt family.

It localises to the cell inner membrane. It catalyses the reaction L-cysteinyl-[prolipoprotein] + a 1,2-diacyl-sn-glycero-3-phospho-(1'-sn-glycerol) = an S-1,2-diacyl-sn-glyceryl-L-cysteinyl-[prolipoprotein] + sn-glycerol 1-phosphate + H(+). Its pathway is protein modification; lipoprotein biosynthesis (diacylglyceryl transfer). Catalyzes the transfer of the diacylglyceryl group from phosphatidylglycerol to the sulfhydryl group of the N-terminal cysteine of a prolipoprotein, the first step in the formation of mature lipoproteins. In Pectobacterium carotovorum subsp. carotovorum (strain PC1), this protein is Phosphatidylglycerol--prolipoprotein diacylglyceryl transferase.